Reading from the N-terminus, the 57-residue chain is uncharacterized protein (57 aa).

This is an uncharacterized protein from Ureaplasma parvum serovar 3 (strain ATCC 700970).